The primary structure comprises 315 residues: Mitochondrial glutamate carrier 2 (315 aa).

Solcar repeat units lie at residues 6 to 92 (LSIT…FRRL), 100 to 210 (RNLK…LNNL), and 219 to 308 (ASFA…GIGE). Transmembrane regions (helical) follow at residues 12–32 (LING…IDLA), 61–81 (FFGM…EKAI), and 106–126 (MLAG…MEML). Residues 141–160 (QGSASAPSTSRSYTTGSAST) are disordered. Positions 142-159 (GSASAPSTSRSYTTGSAS) are enriched in polar residues. Phosphoserine is present on serine 145. A run of 3 helical transmembrane segments spans residues 185 to 205 (GLGA…PLFA), 225 to 245 (FVSG…LDVL), and 288 to 308 (ALVI…GIGE).

It belongs to the mitochondrial carrier (TC 2.A.29) family. In terms of tissue distribution, expressed in brain, to a lesser extent in testis, and poorly in all the other tissues.

It is found in the mitochondrion inner membrane. It carries out the reaction L-glutamate(in) + H(+)(in) = L-glutamate(out) + H(+)(out). In terms of biological role, responsible for the transport of glutamate from the cytosol into the mitochondrial matrix with the concomitant import of a proton (symport system). In Homo sapiens (Human), this protein is Mitochondrial glutamate carrier 2.